A 78-amino-acid polypeptide reads, in one-letter code: RNA-binding protein Hfq (78 aa).

Positions Asp10–Val69 constitute a Sm domain.

Belongs to the Hfq family. Homohexamer.

In terms of biological role, RNA chaperone that binds small regulatory RNA (sRNAs) and mRNAs to facilitate mRNA translational regulation in response to envelope stress, environmental stress and changes in metabolite concentrations. Also binds with high specificity to tRNAs. The polypeptide is RNA-binding protein Hfq (Herminiimonas arsenicoxydans).